The chain runs to 298 residues: tRNA(Met) cytidine acetate ligase (298 aa).

Residues 6–19 (IAEYNPFHNGHIYQ), Gly-100, Asn-157, and Arg-182 each bind ATP.

It belongs to the TmcAL family.

It is found in the cytoplasm. The enzyme catalyses cytidine(34) in elongator tRNA(Met) + acetate + ATP = N(4)-acetylcytidine(34) in elongator tRNA(Met) + AMP + diphosphate. Catalyzes the formation of N(4)-acetylcytidine (ac(4)C) at the wobble position of elongator tRNA(Met), using acetate and ATP as substrates. First activates an acetate ion to form acetyladenylate (Ac-AMP) and then transfers the acetyl group to tRNA to form ac(4)C34. This Mycoplasmopsis pulmonis (strain UAB CTIP) (Mycoplasma pulmonis) protein is tRNA(Met) cytidine acetate ligase.